The sequence spans 221 residues: Deoxyribose-phosphate aldolase (221 aa).

D90 serves as the catalytic Proton donor/acceptor. K152 acts as the Schiff-base intermediate with acetaldehyde in catalysis. The active-site Proton donor/acceptor is the K181.

Belongs to the DeoC/FbaB aldolase family. DeoC type 1 subfamily.

The protein resides in the cytoplasm. It carries out the reaction 2-deoxy-D-ribose 5-phosphate = D-glyceraldehyde 3-phosphate + acetaldehyde. Its pathway is carbohydrate degradation; 2-deoxy-D-ribose 1-phosphate degradation; D-glyceraldehyde 3-phosphate and acetaldehyde from 2-deoxy-alpha-D-ribose 1-phosphate: step 2/2. In terms of biological role, catalyzes a reversible aldol reaction between acetaldehyde and D-glyceraldehyde 3-phosphate to generate 2-deoxy-D-ribose 5-phosphate. The sequence is that of Deoxyribose-phosphate aldolase from Syntrophotalea carbinolica (strain DSM 2380 / NBRC 103641 / GraBd1) (Pelobacter carbinolicus).